The following is a 144-amino-acid chain: Large ribosomal subunit protein uL14 (144 aa).

It belongs to the universal ribosomal protein uL14 family. In terms of assembly, part of the 50S ribosomal subunit. Forms a cluster with proteins L3 and L24e, part of which may contact the 16S rRNA in 2 intersubunit bridges.

In terms of biological role, binds to 23S rRNA. Forms part of two intersubunit bridges in the 70S ribosome. This chain is Large ribosomal subunit protein uL14, found in Cenarchaeum symbiosum (strain A).